The following is a 36-amino-acid chain: Asteropin-A (36 aa).

3 cysteine pairs are disulfide-bonded: cysteine 2/cysteine 18, cysteine 9/cysteine 25, and cysteine 17/cysteine 35.

Functionally, sialidase inhibitor. Competitively inhibits bacterial sialidases, but not viral sialidases. Does not inhibit glycosidases or proteases. Has no antitumor activity. The protein is Asteropin-A of Asteropus simplex (Marine sponge).